Reading from the N-terminus, the 138-residue chain is Large ribosomal subunit protein uL16 (138 aa).

Residues M1–Q13 show a composition bias toward basic residues. Residues M1–G24 are disordered.

The protein belongs to the universal ribosomal protein uL16 family. In terms of assembly, part of the 50S ribosomal subunit.

In terms of biological role, binds 23S rRNA and is also seen to make contacts with the A and possibly P site tRNAs. This chain is Large ribosomal subunit protein uL16, found in Burkholderia multivorans (strain ATCC 17616 / 249).